Consider the following 437-residue polypeptide: mRNA cleavage and polyadenylation factor CLP1 (437 aa).

Residues Glu-23 and 122 to 127 (STGKSS) contribute to the ATP site.

It belongs to the Clp1 family. Clp1 subfamily. As to quaternary structure, component of a pre-mRNA cleavage factor complex. Interacts directly with PCF11.

The protein localises to the nucleus. Functionally, required for endonucleolytic cleavage during polyadenylation-dependent pre-mRNA 3'-end formation. The sequence is that of mRNA cleavage and polyadenylation factor CLP1 from Kluyveromyces lactis (strain ATCC 8585 / CBS 2359 / DSM 70799 / NBRC 1267 / NRRL Y-1140 / WM37) (Yeast).